The following is a 606-amino-acid chain: Putative helicase 172L (606 aa).

The Helicase ATP-binding domain occupies 59–264; the sequence is GEKTWGVRGG…WAQLRFCGYK (206 aa). Residue 72-79 participates in ATP binding; the sequence is LCMGLGKT. The Helicase C-terminal domain occupies 437–586; the sequence is YIKSSNFEIS…ASYLEGKERI (150 aa).

This sequence belongs to the SNF2/RAD54 helicase family.

The sequence is that of Putative helicase 172L from Invertebrate iridescent virus 6 (IIV-6).